Reading from the N-terminus, the 485-residue chain is Ribulose bisphosphate carboxylase large chain (485 aa).

Residues Asn-124 and Thr-174 each contribute to the substrate site. Lys-176 serves as the catalytic Proton acceptor. Lys-178 is a substrate binding site. Mg(2+) contacts are provided by Lys-202, Asp-204, and Glu-205. The residue at position 202 (Lys-202) is an N6-carboxylysine. His-294 serves as the catalytic Proton acceptor. Substrate-binding residues include Arg-295, His-327, and Ser-379.

It belongs to the RuBisCO large chain family. Type I subfamily. Heterohexadecamer of 8 large chains and 8 small chains. Requires Mg(2+) as cofactor.

It catalyses the reaction 2 (2R)-3-phosphoglycerate + 2 H(+) = D-ribulose 1,5-bisphosphate + CO2 + H2O. The catalysed reaction is D-ribulose 1,5-bisphosphate + O2 = 2-phosphoglycolate + (2R)-3-phosphoglycerate + 2 H(+). Its function is as follows. RuBisCO catalyzes two reactions: the carboxylation of D-ribulose 1,5-bisphosphate, the primary event in carbon dioxide fixation, as well as the oxidative fragmentation of the pentose substrate. Both reactions occur simultaneously and in competition at the same active site. The sequence is that of Ribulose bisphosphate carboxylase large chain from Rhodopseudomonas palustris (strain BisA53).